Reading from the N-terminus, the 171-residue chain is Putative MucR family transcriptional regulatory protein y4pD (171 aa).

The protein belongs to the ros/MucR family.

The sequence is that of Putative MucR family transcriptional regulatory protein y4pD from Sinorhizobium fredii (strain NBRC 101917 / NGR234).